The primary structure comprises 453 residues: Lipase 9 (453 aa).

The first 14 residues, 1-14 (MLYLILFLIAPIYA), serve as a signal peptide directing secretion. A glycan (N-linked (GlcNAc...) asparagine) is linked at asparagine 36. An intrachain disulfide couples cysteine 110 to cysteine 281. Serine 194 acts as the Charge relay system in catalysis. Asparagine 229, asparagine 266, and asparagine 269 each carry an N-linked (GlcNAc...) asparagine glycan. Catalysis depends on charge relay system residues aspartate 343 and histidine 376. Cysteine 359 and cysteine 404 are joined by a disulfide. Asparagine 417 carries N-linked (GlcNAc...) asparagine glycosylation.

It belongs to the AB hydrolase superfamily. Lipase family. Class Lip subfamily.

The protein localises to the secreted. The enzyme catalyses a triacylglycerol + H2O = a diacylglycerol + a fatty acid + H(+). Functionally, secreted lipase that is able to hydrolyze both the neutral triacylglycerols and the monopalmitate ester Tween 40, allowing the use of hydrolyzed products as carbon sources. Has broad lipolytic activity, which may be important for colonization and subsequent infection, therefore contributing to the persistence and virulence in human tissue. In Candida albicans (strain SC5314 / ATCC MYA-2876) (Yeast), this protein is Lipase 9.